Here is a 317-residue protein sequence, read N- to C-terminus: Melanocyte-stimulating hormone receptor (317 aa).

Topologically, residues 1–37 (MAVQGSQRRLLGSLNSTPTAIPQLGLAANQTGAWCLE) are extracellular. A glycan (N-linked (GlcNAc...) asparagine) is linked at N29. Residues 38–63 (VSIPDGLFLSLGLVSLVENVLVVATI) traverse the membrane as a helical segment. The Cytoplasmic segment spans residues 64–72 (AKNRNLHSP). The helical transmembrane segment at 73–93 (MYCFICCLALSDLLVSGGNVL) threads the bilayer. The Extracellular portion of the chain corresponds to 94–118 (ETAVILLLEAGALAARAAVVQQLDN). A helical membrane pass occupies residues 119–140 (VIDVITCSSMLSSLCFLGAIAV). Residues 141-163 (DRYISIFYALRYHSIVTLPRARR) lie on the Cytoplasmic side of the membrane. A helical membrane pass occupies residues 164 to 183 (AIAAIWVASVLFSTLFIAYY). Over 184 to 191 (DHAAVLLC) the chain is Extracellular. The chain crosses the membrane as a helical span at residues 192 to 211 (LVVFFLAMLVLMAVLYVHML). Over 212-240 (ARACQHAQGIARLHKRQRPVHQGFGLKGA) the chain is Cytoplasmic. The chain crosses the membrane as a helical span at residues 241-266 (VTLTILLGIFFLCWGPFFLHLTLIVL). Over 267 to 279 (CPQHPTCSCIFKN) the chain is Extracellular. Residues 280 to 300 (FNLFLALIICNAIIDPLIYAF) form a helical membrane-spanning segment. The Cytoplasmic segment spans residues 301–317 (RSQELRRTLKEVLTCSW). A lipid anchor (S-palmitoyl cysteine) is attached at C315.

It belongs to the G-protein coupled receptor 1 family. Interacts with MGRN1, but does not undergo MGRN1-mediated ubiquitination; this interaction competes with GNAS-binding and thus inhibits agonist-induced cAMP production. Interacts with OPN3; the interaction results in a decrease in MC1R-mediated cAMP signaling and ultimately a decrease in melanin production in melanocytes.

The protein resides in the cell membrane. Functionally, receptor for MSH (alpha, beta and gamma) and ACTH. The activity of this receptor is mediated by G proteins which activate adenylate cyclase. Mediates melanogenesis, the production of eumelanin (black/brown) and phaeomelanin (red/yellow), via regulation of cAMP signaling in melanocytes. In Pongo pygmaeus (Bornean orangutan), this protein is Melanocyte-stimulating hormone receptor (MC1R).